Reading from the N-terminus, the 114-residue chain is T cell receptor beta variable 6-5 (114 aa).

A signal peptide spans 1–21 (MSIGLLCCAALSLLWAGPVNA). Residues 22-114 (GVTQTPKFQV…TSVYFCASSY (93 aa)) enclose the Ig-like domain. Residues C42 and C110 are joined by a disulfide bond. An N-linked (GlcNAc...) asparagine glycan is attached at N84.

In terms of assembly, alpha-beta TR is a heterodimer composed of an alpha and beta chain; disulfide-linked. The alpha-beta TR is associated with the transmembrane signaling CD3 coreceptor proteins to form the TR-CD3 (TcR or TCR). The assembly of alpha-beta TR heterodimers with CD3 occurs in the endoplasmic reticulum where a single alpha-beta TR heterodimer associates with one CD3D-CD3E heterodimer, one CD3G-CD3E heterodimer and one CD247 homodimer forming a stable octameric structure. CD3D-CD3E and CD3G-CD3E heterodimers preferentially associate with TR alpha and TR beta chains, respectively. The association of the CD247 homodimer is the last step of TcR assembly in the endoplasmic reticulum and is required for transport to the cell surface.

It is found in the cell membrane. V region of the variable domain of T cell receptor (TR) beta chain that participates in the antigen recognition. Alpha-beta T cell receptors are antigen specific receptors which are essential to the immune response and are present on the cell surface of T lymphocytes. Recognize peptide-major histocompatibility (MH) (pMH) complexes that are displayed by antigen presenting cells (APC), a prerequisite for efficient T cell adaptive immunity against pathogens. Binding of alpha-beta TR to pMH complex initiates TR-CD3 clustering on the cell surface and intracellular activation of LCK that phosphorylates the ITAM motifs of CD3G, CD3D, CD3E and CD247 enabling the recruitment of ZAP70. In turn ZAP70 phosphorylates LAT, which recruits numerous signaling molecules to form the LAT signalosome. The LAT signalosome propagates signal branching to three major signaling pathways, the calcium, the mitogen-activated protein kinase (MAPK) kinase and the nuclear factor NF-kappa-B (NF-kB) pathways, leading to the mobilization of transcription factors that are critical for gene expression and essential for T cell growth and differentiation. The T cell repertoire is generated in the thymus, by V-(D)-J rearrangement. This repertoire is then shaped by intrathymic selection events to generate a peripheral T cell pool of self-MH restricted, non-autoaggressive T cells. Post-thymic interaction of alpha-beta TR with the pMH complexes shapes TR structural and functional avidity. In Homo sapiens (Human), this protein is T cell receptor beta variable 6-5.